Here is a 763-residue protein sequence, read N- to C-terminus: Polyribonucleotide nucleotidyltransferase (763 aa).

2 residues coordinate Mg(2+): Asp526 and Asp532. The KH domain maps to 592–651 (PRITTIKVPVDKIGEVIGPKGKMINSITEETGAQISIEDDGTVFVGAADGLSAQAAIDKI). The region spanning 663–732 (GERFLGTVVK…NRGKISLVLV (70 aa)) is the S1 motif domain. Positions 739-763 (SAESAGDKGAEKAEGAAADVTPAEA) are disordered. A compositionally biased stretch (basic and acidic residues) spans 743–752 (AGDKGAEKAE).

This sequence belongs to the polyribonucleotide nucleotidyltransferase family. Requires Mg(2+) as cofactor.

The protein localises to the cytoplasm. The catalysed reaction is RNA(n+1) + phosphate = RNA(n) + a ribonucleoside 5'-diphosphate. Its function is as follows. Involved in mRNA degradation. Catalyzes the phosphorolysis of single-stranded polyribonucleotides processively in the 3'- to 5'-direction. The polypeptide is Polyribonucleotide nucleotidyltransferase (Mycolicibacterium smegmatis (strain ATCC 700084 / mc(2)155) (Mycobacterium smegmatis)).